The chain runs to 343 residues: Homeobox protein DBX1 (343 aa).

Disordered stretches follow at residues 56–100 (RSVP…TAFS) and 240–343 (KERE…ITVS). The homeobox DNA-binding region spans 181–240 (GMLRRAVFSDVQRKALEKMFQKQKYISKPDRKKLAAKLGLKDSQVKIWFQNRRMKWRNSK). The segment covering 314-323 (AHSSSPGKPS) has biased composition (low complexity). The span at 326-343 (SDSEEEEEGEEQEEITVS) shows a compositional bias: acidic residues.

It belongs to the H2.0 homeobox family.

Its subcellular location is the nucleus. Its function is as follows. Could have a role in patterning the central nervous system during embryogenesis. Has a key role in regulating the distinct phenotypic features that distinguish two major classes of ventral interneurons, V0 and V1 neurons. Regulates the transcription factor profile, neurotransmitter phenotype, intraspinal migratory path and axonal trajectory of V0 neurons, features that differentiate them from an adjacent set of V1 neurons. The protein is Homeobox protein DBX1 (DBX1) of Homo sapiens (Human).